The following is a 148-amino-acid chain: ASCH domain-containing ribonuclease (148 aa).

Residues serine 13–asparagine 70 enclose the ASCH domain.

It depends on Mn(2+) as a cofactor. The cofactor is Ni(2+).

In terms of biological role, shows sequence-specific endoribonuclease activity towards single-stranded RNA (ssRNA), with a preference for the bond between pyrimidine and adenine nucleotides. May also have 5'-exonuclease activity. The sequence is that of ASCH domain-containing ribonuclease from Zymomonas mobilis subsp. mobilis (strain ATCC 10988 / DSM 424 / LMG 404 / NCIMB 8938 / NRRL B-806 / ZM1).